The following is a 400-amino-acid chain: MSSISSAPQQQFSLRYHKASISYILPISSRYIYSADQSGLVIKWDLQIRRPKLQWQAHKDSILTILQWHQYIVTHSRDSTIKVWLEDILQFEMPVNALNYTNIVLYRDNYLITPATLDSNNVDVYKLKQHPIEVSRVIANISIFELVNKTRTNMHANKAGDGVDINVKYADEFAIDDKDNMQGRQDFGIIMKMLVIDMTIYIGFESGDIVGLHLEVPESKLTRGSNSTLLINREPRLKLEYQNTLLVPNPVISLANLNGLLVSGSTGTKVVIHSDPTRTVKFHLSGIHSIQTYQDRLVIGFWDGAIEYKGEIIQRPLPQIKGGLDINSNGDDENEEENLKSNVKLTSMTLSSFGNSSGSDTAKVQHVRKPKYSEMVKAKSMSDALFAGYEDGTIMGYALI.

WD repeat units lie at residues 6–54, 57–94, 240–272, and 273–312; these read SAPQ…PKLQ, AHKD…FEMP, EYQN…KVVI, and HSDP…KGEI.

This sequence belongs to the WD repeat ASA1 family. Component of the ASTRA chromatin remodeling machinery complex.

Its subcellular location is the nucleus. Functionally, component of the ASTRA complex involved in chromatin remodeling. In Lodderomyces elongisporus (strain ATCC 11503 / CBS 2605 / JCM 1781 / NBRC 1676 / NRRL YB-4239) (Yeast), this protein is ASTRA-associated protein 1 (ASA1).